We begin with the raw amino-acid sequence, 212 residues long: Probable nicotinate-nucleotide adenylyltransferase (212 aa).

This sequence belongs to the NadD family.

The enzyme catalyses nicotinate beta-D-ribonucleotide + ATP + H(+) = deamido-NAD(+) + diphosphate. The protein operates within cofactor biosynthesis; NAD(+) biosynthesis; deamido-NAD(+) from nicotinate D-ribonucleotide: step 1/1. Catalyzes the reversible adenylation of nicotinate mononucleotide (NaMN) to nicotinic acid adenine dinucleotide (NaAD). In Shewanella sp. (strain ANA-3), this protein is Probable nicotinate-nucleotide adenylyltransferase.